The sequence spans 465 residues: Protein unc-93 homolog A (465 aa).

5 helical membrane-spanning segments follow: residues 8–28, 40–60, 71–91, 96–118, and 140–160; these read VLVV…LQSL, VISL…LPPI, IVVS…PGWA, TSAI…LTIS, and IFFF…SLIF. N-linked (GlcNAc...) asparagine glycosylation is found at N183 and N189. The helical transmembrane segment at 200–220 threads the bilayer; the sequence is TLLGCYIGVGLLAIIFVAVFL. An N-linked (GlcNAc...) asparagine glycan is attached at N237. Transmembrane regions (helical) follow at residues 256–276, 281–301, 319–339, 343–363, and 410–427; these read LLLL…LSGE, YVTC…FAAS, IALF…LLYW, PDQL…DAVW, and IYIA…YLYV.

Belongs to the unc-93 family.

The protein resides in the membrane. This Danio rerio (Zebrafish) protein is Protein unc-93 homolog A (unc93a).